The chain runs to 1406 residues: Carboxypeptidase D (1406 aa).

A signal peptide spans 1-25 (MPTLGLLFASIGIAVLAMGVPHCRG). At 26–1312 (YTIKEDESFL…VNEHVFGLPR (1287 aa)) the chain is on the extracellular side. 2 consecutive Peptidase M14 domains span residues 39 to 335 (HYAS…LRQA) and 455 to 760 (EHHN…IEQV). Positions 101 and 104 each coordinate Zn(2+). The N-linked (GlcNAc...) asparagine glycan is linked to Asn133. Cystine bridges form between Cys156–Cys309, Cys236–Cys237, and Cys268–Cys308. His217 serves as a coordination point for Zn(2+). N-linked (GlcNAc...) asparagine glycosylation is present at Asn269. Residue Glu305 is the Proton donor/acceptor of the active site. An N-linked (GlcNAc...) asparagine glycan is attached at Asn458. Residues His517 and Glu520 each coordinate Zn(2+). N-linked (GlcNAc...) asparagine glycosylation is found at Asn549 and Asn612. His626 is a Zn(2+) binding site. N-linked (GlcNAc...) asparagine glycosylation occurs at Asn652. Glu730 serves as the catalytic Proton donor/acceptor. 5 N-linked (GlcNAc...) asparagine glycosylation sites follow: Asn787, Asn808, Asn981, Asn1152, and Asn1251. Residues 863-1121 (RYHTNPQVRA…DKIKNFLALV (259 aa)) form the Peptidase M14 3 domain. The helical transmembrane segment at 1313-1333 (FLFILCASVLIIVGVIVCVLC) threads the bilayer. The Cytoplasmic segment spans residues 1334–1406 (AQFWFYRRHR…TNYSFIIQAA (73 aa)). A Cell attachment site motif is present at residues 1343–1345 (RGD). The residue at position 1380 (Ser1380) is a Phosphoserine.

It belongs to the peptidase M14 family. Monomer. It depends on Zn(2+) as a cofactor. As to expression, expressed in the central nervous system (CNS) of adults and larvae. In the adult brain, increased levels of expression in the mushroom body (MB) and neurosecretory cells.

Its subcellular location is the membrane. It localises to the cytoplasm. It is found in the perinuclear region. The protein localises to the golgi apparatus. The protein resides in the trans-Golgi network. Its subcellular location is the secreted. It carries out the reaction Releases C-terminal Arg and Lys from polypeptides.. Inhibited by 2-guanidinoethylmercaptosuccinic acid (GEMSA). Functionally, metallocarboxypeptidase that catalyzes the release of C-terminal arginine or lysine residues from peptides and proteins. Functionally important for processing a broad range of proteins including growth factors, peptide hormones (such as Akh) and neuropeptides. Consequently, it is involved in a wide range of processes including viability, memory formation, locomotive activity, wing formation, and peptide-regulated behaviors such as starvation-induced hyperactivity, appetitive gustatory preference, and cold and ethanol sensitivity. Key enzyme in neuropeptide processing. Involved in regulation of memory formation, possibly via the insulin pathway in neurosecretory cells. In Drosophila melanogaster (Fruit fly), this protein is Carboxypeptidase D.